The following is a 282-amino-acid chain: 4-hydroxybenzoate octaprenyltransferase (282 aa).

9 helical membrane passes run 17-37, 40-60, 90-110, 113-133, 135-155, 163-183, 207-227, 231-251, and 262-282; these read IGIL…NQGF, IDLL…GCVI, AFIL…KLPI, FYFA…KRFF, APQL…FIAS, FIVL…MYAM, LIIA…AINK, CFFY…LKLI, and AFLV…LALI.

It belongs to the UbiA prenyltransferase family. Mg(2+) is required as a cofactor.

It is found in the cell inner membrane. It carries out the reaction all-trans-octaprenyl diphosphate + 4-hydroxybenzoate = 4-hydroxy-3-(all-trans-octaprenyl)benzoate + diphosphate. It participates in cofactor biosynthesis; ubiquinone biosynthesis. Its function is as follows. Catalyzes the prenylation of para-hydroxybenzoate (PHB) with an all-trans polyprenyl group. Mediates the second step in the final reaction sequence of ubiquinone-8 (UQ-8) biosynthesis, which is the condensation of the polyisoprenoid side chain with PHB, generating the first membrane-bound Q intermediate 3-octaprenyl-4-hydroxybenzoate. The sequence is that of 4-hydroxybenzoate octaprenyltransferase from Legionella pneumophila (strain Lens).